Consider the following 193-residue polypeptide: Cyanate hydratase (193 aa).

Active-site residues include Arg121, Glu124, and Ser147.

The protein belongs to the cyanase family.

It catalyses the reaction cyanate + hydrogencarbonate + 3 H(+) = NH4(+) + 2 CO2. Its function is as follows. Catalyzes the reaction of cyanate with bicarbonate to produce ammonia and carbon dioxide. This chain is Cyanate hydratase, found in Phaeodactylum tricornutum (strain CCAP 1055/1).